Consider the following 638-residue polypeptide: Methyl-accepting chemotaxis protein McpQ (638 aa).

Residues 18 to 38 form a helical membrane-spanning segment; it reads LGLGFGLVLLLTLAITLTGWH. Residues 45 to 282 form the HBM domain; that stretch reads DRGDKLGNIS…SQTEVRDAAA (238 aa). The chain crosses the membrane as a helical span at residues 287–307; the sequence is TLLTVATVLALALGLLAAWAI. The 53-residue stretch at 309–361 folds into the HAMP domain; the sequence is RQIIIPLRQTLRAAERVASGDLTQSLQVQRRDELGQLQASMHRMTQGLRELIG. The Methyl-accepting transducer domain occupies 366 to 602; that stretch reads GVTQIASAAE…EINRSVMNVR (237 aa).

This sequence belongs to the methyl-accepting chemotaxis (MCP) protein family.

Its subcellular location is the cell membrane. Its function is as follows. Chemotactic-signal transducers respond to changes in the concentration of attractants and repellents in the environment, transduce a signal from the outside to the inside of the cell, and facilitate sensory adaptation through the variation of the level of methylation. McpQ recognizes specifically citrate and citrate/metal(2+) complexes. Binds citrate/metal(2+) complexes with higher affinity than free citrate, and mediates preferentially chemotaxis toward citrate/metal(2+) complexes. The protein is Methyl-accepting chemotaxis protein McpQ of Pseudomonas putida (strain ATCC 47054 / DSM 6125 / CFBP 8728 / NCIMB 11950 / KT2440).